Here is a 599-residue protein sequence, read N- to C-terminus: Purine-uracil permease NCS1 (599 aa).

Transmembrane regions (helical) follow at residues 140–160, 164–184, 218–238, 257–277, 293–313, 327–347, 363–383, 411–433, 445–465, 474–494, 525–545, and 560–580; these read LWIGLVVGVPTYYLAGSLVDL, WWQGIATVVTANLILLVPLVL, LVGCGWYGIETWIGGEAIFLL, TSPLEFSCFIVFWLAQLCIVW, ILISLTSCLLAWSYLKAGGFG, FWTLFFPSLTANISFWATLAL, IIGQVGLPVFMGLFTFVGVAV, TLLAIVGISLATLTTNIAANVVA, FFTFGRGAFLTAVLGIVFQPW, FVYTWLIGYSALLGPIGGIIL, YNVAAVVALVAGIIPVVPGFL, and VVYDNALFFSFIIAGFVYWII.

The protein belongs to the purine-cytosine permease (2.A.39) family. Expressed in roots, leaves, stems, flowers, siliques and seeds.

Its subcellular location is the plastid. It is found in the chloroplast envelope. The protein resides in the chloroplast membrane. Nucleobase-proton symporter that facilitates the uptake of nucleobases in the cells. Can transport adenine, guanine and uracil. Contributes to uracil import into plastids for plastidic uracil salvage which is essential for plant growth and development. In Arabidopsis thaliana (Mouse-ear cress), this protein is Purine-uracil permease NCS1.